A 414-amino-acid polypeptide reads, in one-letter code: 3-phosphoshikimate 1-carboxyvinyltransferase (414 aa).

Positions 20, 21, and 25 each coordinate 3-phosphoshikimate. Lysine 20 is a binding site for phosphoenolpyruvate. 2 residues coordinate phosphoenolpyruvate: glycine 88 and arginine 116. Residues threonine 157, serine 158, glutamine 159, serine 183, aspartate 297, and lysine 324 each coordinate 3-phosphoshikimate. A phosphoenolpyruvate-binding site is contributed by glutamine 159. Aspartate 297 (proton acceptor) is an active-site residue. Residues arginine 328, arginine 369, and lysine 395 each coordinate phosphoenolpyruvate.

This sequence belongs to the EPSP synthase family. In terms of assembly, monomer.

The protein localises to the cytoplasm. It carries out the reaction 3-phosphoshikimate + phosphoenolpyruvate = 5-O-(1-carboxyvinyl)-3-phosphoshikimate + phosphate. The protein operates within metabolic intermediate biosynthesis; chorismate biosynthesis. Catalyzes the transfer of the enolpyruvyl moiety of phosphoenolpyruvate (PEP) to the 5-hydroxyl of shikimate-3-phosphate (S3P) to produce enolpyruvyl shikimate-3-phosphate and inorganic phosphate. This Caldivirga maquilingensis (strain ATCC 700844 / DSM 13496 / JCM 10307 / IC-167) protein is 3-phosphoshikimate 1-carboxyvinyltransferase.